A 486-amino-acid chain; its full sequence is Nucleolar protein 56 (486 aa).

A Nop domain is found at 298–416 (CAPSLSALIG…VEDRLEYFTS (119 aa)). The tract at residues 450–486 (KKAKRLAEESVTATAEAEVDEDAPKPKKKKKSKAGDE) is disordered. The span at 475–486 (PKKKKKSKAGDE) shows a compositional bias: basic residues.

Belongs to the NOP5/NOP56 family.

It is found in the nucleus. Its subcellular location is the nucleolus. Required for 60S ribosomal subunit synthesis. This chain is Nucleolar protein 56, found in Caenorhabditis elegans.